The chain runs to 359 residues: N6-succino-2-amino-2'-deoxyadenylate synthase (359 aa).

Ser23 functions as the Proton acceptor in the catalytic mechanism. The ATP site is built by Ser23, Thr24, Gly25, Lys26, and Gly27. Ser23 is a binding site for dGMP. Ser23 contributes to the Mg(2+) binding site. Residue Asn49 participates in dGMP binding. The ATP site is built by Gly51, His52, and Thr53. Position 51 (Gly51) interacts with Mg(2+). Ser131, Thr132, and Arg146 together coordinate dGMP. Residue Gln190 coordinates ATP. Residue Thr205 coordinates dGMP. Residue Thr274 coordinates Mg(2+). L-aspartate contacts are provided by Thr274, Val275, and Arg280. Positions 305 and 308 each coordinate ATP.

The protein belongs to the Caudovirales PurZ family. Requires Mg(2+) as cofactor.

It catalyses the reaction dGMP + L-aspartate + ATP = (2S)-2-amino-2'-deoxyadenylo-succinate + ADP + phosphate + 2 H(+). It functions in the pathway purine metabolism. Its function is as follows. Involved in the synthesis of the atypical nucleotide dZTP (2-amino-2'-deoxyadenosine-5'-triphosphate). Catalyzes the condensation of aspartate with deoxyguanylate into dSMP (N6-succino-2-amino-2'-deoxyadenylate), which undergoes defumarylation and phosphorylation respectively by host PurB and guanylate/nucleoside diphosphate kinases to give dZTP. dZTP is integrated into the viral genome instead of adenine by the viral DNA polymerase. This Z-base probably completely replaces adenosine and forms a triple bond to the opposite T-base. The resulting non-standard viral DNA is called Z-genome. The chemically modified DNA is probably harder for the host bacteria to digest with nucleases or restriction enzymes. The chain is N6-succino-2-amino-2'-deoxyadenylate synthase from Cyanophage S-2L (Cyanobacteria phage S-2L).